Here is a 141-residue protein sequence, read N- to C-terminus: MAARLCCQLDSARDVLLLRPFGPQSSGPPFPRPAAGSAASSTSSPSPSDESDLPLGRLPACFASASGPCCLVFTCADLRTMDSTVNFVSWHAKRQLGMPSKDLWTPYIKDQLLTKWEEGSIDPRLSIFVLGGCRHKCMRLL.

Residues 24 to 52 (QSSGPPFPRPAAGSAASSTSSPSPSDESD) form a disordered region. Low complexity predominate over residues 33–48 (PAAGSAASSTSSPSPS). The interval 68–113 (PCCLVFTCADLRTMDSTVNFVSWHAKRQLGMPSKDLWTPYIKDQLL) is mitochondrial targeting sequence.

The protein belongs to the orthohepadnavirus protein X family. In terms of assembly, may form homodimer. May interact with host CEBPA, CFLAR, CREB1, DDB1, E4F1, HBXIP, HSPD1/HSP60, NFKBIA, POLR2E and SMAD4. Interacts with host SMC5-SMC6 complex and induces its degradation. Interacts with host TRPC4AP; leading to prevent ubiquitination of TRPC4AP. Interacts with host PLSCR1; this interaction promotes ubiquitination and degradation of HBx and impairs HBx-mediated cell proliferation. Post-translationally, a fraction may be phosphorylated in insect cells and HepG2 cells, a human hepatoblastoma cell line. Phosphorylated in vitro by host protein kinase C or mitogen-activated protein kinase. N-acetylated in insect cells.

The protein resides in the host cytoplasm. The protein localises to the host nucleus. Its subcellular location is the host mitochondrion. Multifunctional protein that plays a role in silencing host antiviral defenses and promoting viral transcription. Does not seem to be essential for HBV infection. May be directly involved in development of cirrhosis and liver cancer (hepatocellular carcinoma). Most of cytosolic activities involve modulation of cytosolic calcium. The effect on apoptosis is controversial depending on the cell types in which the studies have been conducted. May induce apoptosis by localizing in mitochondria and causing loss of mitochondrial membrane potential. May also modulate apoptosis by binding host CFLAR, a key regulator of the death-inducing signaling complex (DISC). Promotes viral transcription by using the host E3 ubiquitin ligase DDB1 to target the SMC5-SMC6 complex to proteasomal degradation. This host complex would otherwise bind to viral episomal DNA, and prevents its transcription. Moderately stimulates transcription of many different viral and cellular transcription elements. Promoters and enhancers stimulated by HBx contain DNA binding sites for NF-kappa-B, AP-1, AP-2, c-EBP, ATF/CREB, or the calcium-activated factor NF-AT. The sequence is that of Protein X from Marmota monax (Woodchuck).